Reading from the N-terminus, the 344-residue chain is Uroporphyrinogen decarboxylase (344 aa).

Residues 25–29 (RQAGR), aspartate 75, tyrosine 152, serine 207, and histidine 323 each bind substrate.

The protein belongs to the uroporphyrinogen decarboxylase family. In terms of assembly, homodimer.

The protein resides in the cytoplasm. It catalyses the reaction uroporphyrinogen III + 4 H(+) = coproporphyrinogen III + 4 CO2. The protein operates within porphyrin-containing compound metabolism; protoporphyrin-IX biosynthesis; coproporphyrinogen-III from 5-aminolevulinate: step 4/4. In terms of biological role, catalyzes the decarboxylation of four acetate groups of uroporphyrinogen-III to yield coproporphyrinogen-III. This chain is Uroporphyrinogen decarboxylase, found in Ruegeria pomeroyi (strain ATCC 700808 / DSM 15171 / DSS-3) (Silicibacter pomeroyi).